Consider the following 208-residue polypeptide: MRLRQFIWLSMTQTRTADVSRSTKETEISVSVNLDGTGKADIETGIGFFDHMLDSLARHSLIDLKVRCKGDTHIDFHHSVEDTGIVIGQAIAKALGDFGGITRFGHAYIPMDETLTRASVDLCKRPYLIWKVEFRRDKIGEMDTELFKEFFHALAGNGGMCLHVENIYGENNHHIAESCFKATARALRTAITVDPRLGGKPASTKGSL.

This sequence belongs to the imidazoleglycerol-phosphate dehydratase family.

The protein localises to the cytoplasm. It catalyses the reaction D-erythro-1-(imidazol-4-yl)glycerol 3-phosphate = 3-(imidazol-4-yl)-2-oxopropyl phosphate + H2O. Its pathway is amino-acid biosynthesis; L-histidine biosynthesis; L-histidine from 5-phospho-alpha-D-ribose 1-diphosphate: step 6/9. This Hyphomonas neptunium (strain ATCC 15444) protein is Imidazoleglycerol-phosphate dehydratase.